The chain runs to 350 residues: Biotin synthase (350 aa).

The 225-residue stretch at 54-278 (REIQLSTLLS…TMPQSYVRLS (225 aa)) folds into the Radical SAM core domain. [4Fe-4S] cluster contacts are provided by cysteine 69, cysteine 73, and cysteine 76. [2Fe-2S] cluster-binding residues include cysteine 113, cysteine 144, cysteine 204, and arginine 276.

This sequence belongs to the radical SAM superfamily. Biotin synthase family. As to quaternary structure, homodimer. [4Fe-4S] cluster serves as cofactor. The cofactor is [2Fe-2S] cluster.

It carries out the reaction (4R,5S)-dethiobiotin + (sulfur carrier)-SH + 2 reduced [2Fe-2S]-[ferredoxin] + 2 S-adenosyl-L-methionine = (sulfur carrier)-H + biotin + 2 5'-deoxyadenosine + 2 L-methionine + 2 oxidized [2Fe-2S]-[ferredoxin]. The protein operates within cofactor biosynthesis; biotin biosynthesis; biotin from 7,8-diaminononanoate: step 2/2. Catalyzes the conversion of dethiobiotin (DTB) to biotin by the insertion of a sulfur atom into dethiobiotin via a radical-based mechanism. The protein is Biotin synthase of Neisseria meningitidis serogroup A / serotype 4A (strain DSM 15465 / Z2491).